We begin with the raw amino-acid sequence, 401 residues long: Propionate kinase (401 aa).

ATP-binding residues include Asn-11 and Lys-18. Asn-11 is a Mg(2+) binding site. Arg-86 contacts substrate. Asp-143 functions as the Proton donor/acceptor in the catalytic mechanism. ATP-binding positions include His-175, 203-207, 278-280, and 326-330; these read HLGNG, DLR, and GIGEN.

Belongs to the acetokinase family. TdcD subfamily. Homodimer. Requires Mg(2+) as cofactor.

The enzyme catalyses propanoate + ATP = propanoyl phosphate + ADP. The protein operates within amino-acid degradation; L-threonine degradation via propanoate pathway; propanoate from L-threonine: step 4/4. Functionally, catalyzes the conversion of propionyl phosphate and ADP to propionate and ATP. This chain is Propionate kinase, found in Klebsiella pneumoniae (strain 342).